Consider the following 355-residue polypeptide: G protein alpha i subunit (355 aa).

A lipid anchor (N-myristoyl glycine) is attached at glycine 2. Residue cysteine 3 is the site of S-palmitoyl cysteine attachment. A G-alpha domain is found at 33-355; the sequence is SEVKLLLLGA…KNNLKQIGLF (323 aa). Positions 36–49 are G1 motif; it reads KLLLLGAGESGKST. GTP is bound by residues 41 to 48, 176 to 182, 201 to 205, 270 to 273, and alanine 327; these read GAGESGKS, LRTRVKT, DVGGQ, and NKKD. Mg(2+) contacts are provided by serine 48 and threonine 182. A G2 motif region spans residues 174–182; that stretch reads DVLRTRVKT. The tract at residues 197 to 206 is G3 motif; it reads FKLFDVGGQR. Positions 266-273 are G4 motif; that stretch reads ILFLNKKD. A G5 motif region spans residues 325-330; the sequence is TCATDT.

Belongs to the G-alpha family. G(i/o/t/z) subfamily. As to quaternary structure, g proteins are composed of 3 units; alpha, beta and gamma. The alpha chain contains the guanine nucleotide binding site. Interacts (via GDP- or GTP-bound forms) with loco (via GoLoco and RGS domains). Interacts with raps/pins.

It localises to the cell membrane. Its subcellular location is the apical cell membrane. Guanine nucleotide-binding proteins (G proteins) are involved as modulators or transducers in various transmembrane signaling systems. Plays a role in glial cell differentiation during embryogenesis; loco, Galphao and the G-protein coupled receptor, moody, are required in the surface glia to achieve effective insulation of the nerve cord. This Drosophila melanogaster (Fruit fly) protein is G protein alpha i subunit (Galphai).